Here is a 623-residue protein sequence, read N- to C-terminus: E3 ubiquitin-protein ligase DTX1 (623 aa).

WWE domains lie at 13–93 (HNFG…PVRR) and 94–170 (NFFE…RLRR). A disordered region spans residues 224–319 (KVPSGPPPAL…RASIPPGVPA (96 aa)). Residues 227-242 (SGPPPALPPPPPPPIH) show a composition bias toward pro residues. Residues 292 to 311 (GQNNLNRPGEQRTSGSSSRA) show a composition bias toward polar residues. The RING-type zinc-finger motif lies at 413-474 (CTICMERLVT…DGSLQCPTCK (62 aa)).

The protein belongs to the Deltex family. May form a homo- or heterodimer with other members of the Deltex family. Probably interacts with Notch1. Specifically expressed in regions undergoing neuronal differentiation. Mainly colocalizes with Notch1.

It carries out the reaction S-ubiquitinyl-[E2 ubiquitin-conjugating enzyme]-L-cysteine + [acceptor protein]-L-lysine = [E2 ubiquitin-conjugating enzyme]-L-cysteine + N(6)-ubiquitinyl-[acceptor protein]-L-lysine.. Its pathway is protein modification; protein ubiquitination. Regulator of Notch signaling, a signaling pathway involved in cell-cell communications that regulates a broad spectrum of cell-fate determinations. Probably acts both as a positive and negative regulator of Notch, depending on the developmental and cell context. Functions as a ubiquitin ligase protein in vivo, mediating ubiquitination and promoting degradation of MEKK1, suggesting that it may regulate the Notch pathway via some ubiquitin ligase activity. The polypeptide is E3 ubiquitin-protein ligase DTX1 (dtx1) (Xenopus laevis (African clawed frog)).